Consider the following 378-residue polypeptide: 2-aminoethylphosphonate--pyruvate transaminase 1 (378 aa).

Lys194 bears the N6-(pyridoxal phosphate)lysine mark.

It belongs to the class-V pyridoxal-phosphate-dependent aminotransferase family. PhnW subfamily. As to quaternary structure, homodimer. The cofactor is pyridoxal 5'-phosphate.

The enzyme catalyses (2-aminoethyl)phosphonate + pyruvate = phosphonoacetaldehyde + L-alanine. Functionally, involved in phosphonate degradation. The protein is 2-aminoethylphosphonate--pyruvate transaminase 1 of Cupriavidus pinatubonensis (strain JMP 134 / LMG 1197) (Cupriavidus necator (strain JMP 134)).